Reading from the N-terminus, the 163-residue chain is Transcription elongation factor GreA (163 aa).

Positions 11 to 38 (FKQLEKELDRLKKERPGVIQAIKEAREE) form a coiled coil.

It belongs to the GreA/GreB family.

In terms of biological role, necessary for efficient RNA polymerase transcription elongation past template-encoded arresting sites. The arresting sites in DNA have the property of trapping a certain fraction of elongating RNA polymerases that pass through, resulting in locked ternary complexes. Cleavage of the nascent transcript by cleavage factors such as GreA or GreB allows the resumption of elongation from the new 3'terminus. GreA releases sequences of 2 to 3 nucleotides. This Nitratidesulfovibrio vulgaris (strain ATCC 29579 / DSM 644 / CCUG 34227 / NCIMB 8303 / VKM B-1760 / Hildenborough) (Desulfovibrio vulgaris) protein is Transcription elongation factor GreA.